Here is a 410-residue protein sequence, read N- to C-terminus: Sprouty-related, EVH1 domain-containing protein 2 (410 aa).

Residues Thr-5–Leu-122 form the WH1 domain. Residues Thr-127 to Ser-171 form a disordered region. The span at Thr-146–Ser-156 shows a compositional bias: polar residues. The KBD domain maps to Ser-197 to Gly-252. Phosphotyrosine occurs at positions 224 and 227. A disordered region spans residues Asp-274 to Glu-294. Positions Arg-300–Ala-408 constitute an SPR domain.

In terms of assembly, homodimer and heterodimer. Able to interact with SPRED1 to form heterodimers. Interacts with RAS. May interact with ZDHHC13 (via ANK repeats) and ZDHHC17 (via ANK repeats). Interacts with TESK1. Interacts with NF1. In terms of processing, phosphorylated on serine and threonine residues. Phosphorylated on tyrosine. Phosphorylation of Tyr-224 and Tyr-227 are required for ubiquitination. Post-translationally, ubiquitinated; leading to degradation by the proteasome. In terms of tissue distribution, expressed in the eye, with higher expression in lens epithelium than in lens fiber cells at postnatal day 15.

The protein resides in the cell membrane. It is found in the cytoplasmic vesicle. It localises to the secretory vesicle membrane. The protein localises to the cytoplasm. In terms of biological role, negatively regulates Ras signaling pathways and downstream activation of MAP kinases. Recruits and translocates NF1 to the cell membrane, thereby enabling NF1-dependent hydrolysis of active GTP-bound Ras to inactive GDP-bound Ras. Inhibits fibroblast growth factor (FGF)-induced retinal lens fiber differentiation, probably by inhibiting FGF-mediated phosphorylation of ERK1/2. Inhibits TGFB-induced epithelial-to-mesenchymal transition in lens epithelial cells. This chain is Sprouty-related, EVH1 domain-containing protein 2 (Spred2), found in Rattus norvegicus (Rat).